The chain runs to 394 residues: Elongation factor Tu (394 aa).

Positions 10-204 (KPHVNIGTIG…AVDSYIPQPV (195 aa)) constitute a tr-type G domain. The G1 stretch occupies residues 19 to 26 (GHVDHGKT). 19 to 26 (GHVDHGKT) contributes to the GTP binding site. Thr-26 is a Mg(2+) binding site. Positions 60–64 (GITIS) are G2. Positions 81 to 84 (DCPG) are G3. GTP is bound by residues 81-85 (DCPGH) and 136-139 (NKVD). The G4 stretch occupies residues 136-139 (NKVD). Residues 174-176 (SAL) are G5.

This sequence belongs to the TRAFAC class translation factor GTPase superfamily. Classic translation factor GTPase family. EF-Tu/EF-1A subfamily. In terms of assembly, monomer.

Its subcellular location is the cytoplasm. The catalysed reaction is GTP + H2O = GDP + phosphate + H(+). In terms of biological role, GTP hydrolase that promotes the GTP-dependent binding of aminoacyl-tRNA to the A-site of ribosomes during protein biosynthesis. The chain is Elongation factor Tu from Rickettsia massiliae (strain Mtu5).